A 656-amino-acid chain; its full sequence is Leucine aminopeptidase 2 (656 aa).

Residues 173-175 and 302-307 contribute to the substrate site; these read QLE and PYGGME. His331 contributes to the Zn(2+) binding site. The active-site Proton acceptor is Glu332. 2 residues coordinate Zn(2+): His335 and Glu354. Catalysis depends on Tyr420, which acts as the Proton donor.

Belongs to the peptidase M1 family. Zn(2+) is required as a cofactor.

It localises to the cytoplasm. It is found in the nucleus. The enzyme catalyses an epoxide + H2O = an ethanediol. Functionally, aminopeptidase that preferentially cleaves di- and tripeptides. Also has low epoxide hydrolase activity (in vitro). Can hydrolyze the epoxide leukotriene LTA(4) but it forms preferentially 5,6-dihydroxy-7,9,11,14-eicosatetraenoic acid rather than the cytokine leukotriene B(4) as the product compared to the homologous mammalian enzyme (in vitro). In Vanderwaltozyma polyspora (strain ATCC 22028 / DSM 70294 / BCRC 21397 / CBS 2163 / NBRC 10782 / NRRL Y-8283 / UCD 57-17) (Kluyveromyces polysporus), this protein is Leucine aminopeptidase 2.